A 229-amino-acid chain; its full sequence is MKRKNIALIPAAGIGVRFGADKPKQYVEIGSKTVLEHVLGIFERHEAVDLTVVVVSPEDTFADKVQTAFPQVRVWKNGGQTRAETVRNGVAKLLETGLAAETDNILVHDAARCCLPSEALTRLIEQAGNAAEGGILAVPVADTLKRAESGQISATVDRSGLWQAQTPQLFQAGLLHRALAAENLDGITDEASAVEKLGVRPLLIQGDARNLKLTQPQDAYIVRLLLNAV.

The protein belongs to the IspD/TarI cytidylyltransferase family. IspD subfamily.

It catalyses the reaction 2-C-methyl-D-erythritol 4-phosphate + CTP + H(+) = 4-CDP-2-C-methyl-D-erythritol + diphosphate. The protein operates within isoprenoid biosynthesis; isopentenyl diphosphate biosynthesis via DXP pathway; isopentenyl diphosphate from 1-deoxy-D-xylulose 5-phosphate: step 2/6. Functionally, catalyzes the formation of 4-diphosphocytidyl-2-C-methyl-D-erythritol from CTP and 2-C-methyl-D-erythritol 4-phosphate (MEP). This chain is 2-C-methyl-D-erythritol 4-phosphate cytidylyltransferase, found in Neisseria gonorrhoeae (strain NCCP11945).